The following is a 194-amino-acid chain: Peptidyl-tRNA hydrolase (194 aa).

TRNA is bound at residue Tyr17. The active-site Proton acceptor is His22. 3 residues coordinate tRNA: Phe68, Asn70, and Asn116.

It belongs to the PTH family. In terms of assembly, monomer.

The protein localises to the cytoplasm. The catalysed reaction is an N-acyl-L-alpha-aminoacyl-tRNA + H2O = an N-acyl-L-amino acid + a tRNA + H(+). In terms of biological role, hydrolyzes ribosome-free peptidyl-tRNAs (with 1 or more amino acids incorporated), which drop off the ribosome during protein synthesis, or as a result of ribosome stalling. Its function is as follows. Catalyzes the release of premature peptidyl moieties from peptidyl-tRNA molecules trapped in stalled 50S ribosomal subunits, and thus maintains levels of free tRNAs and 50S ribosomes. This Shewanella woodyi (strain ATCC 51908 / MS32) protein is Peptidyl-tRNA hydrolase.